A 1183-amino-acid chain; its full sequence is M-phase phosphoprotein 9 (1183 aa).

Disordered regions lie at residues 28-52 (GLNLNTDRSSPHLSTNGVSSFSGKT), 300-334 (KLKQNQPKRAHVEDGGSRSKQGNEQSKKTPIEKSD), and 472-495 (ISFSPDSVLEPSMSSPSDIDSFSQ). Basic and acidic residues predominate over residues 324-334 (QSKKTPIEKSD). Residues 401 to 800 (TSNEMKLPSL…EAQVKQVEHE (400 aa)) are required for its centrosomal localization. Residues 451-500 (KPKQQISGIQPHGLPNALDDRISFSPDSVLEPSMSSPSDIDSFSQASNVT) are interaction with CEP97. The span at 483–495 (SMSSPSDIDSFSQ) shows a compositional bias: low complexity. A coiled-coil region spans residues 609–804 (DLRAYYESEI…KQVEHENMLS (196 aa)). At Ser-781 the chain carries Phosphoserine; by TTBK2. Lys-784 is covalently cross-linked (Glycyl lysine isopeptide (Lys-Gly) (interchain with G-Cter in ubiquitin)). Ser-788 bears the Phosphoserine; by TTBK2 mark. The interaction with KIF24 stretch occupies residues 801–1031 (NMLSLRHNSR…PVSTLQRTNP (231 aa)). 2 disordered regions span residues 863-894 (LGHRSPLEKDSSPGSSSTSLLIKKQRETSDTP) and 910-999 (NWGT…GFSH). Positions 921–936 (SNINPRQTETSVNASR) are enriched in polar residues. Positions 949-967 (LNSASQRSSSLPPSNRKSS) are enriched in low complexity. At Ser-994 the chain carries Phosphoserine. The stretch at 1109–1174 (RTLAETERFF…GSVRMTLKKF (66 aa)) forms a coiled coil.

As to quaternary structure, interacts with CCP110, CEP97 and KIF24. In terms of processing, TTBK2-mediated phosphorylation at Ser-781 and Ser-788, promotes its ubiquitination at Lys-784 leading to proteasomal degradation, loss of MPHOSPH9 facilitates the removal of the CP110-CEP97 complex from the mother centrioles, promoting the initiation of ciliogenesis. Phosphorylated in M (mitotic) phase. Post-translationally, ubiquitinated at Lys-784, leading to proteasomal degradation.

It localises to the cytoplasm. It is found in the cytoskeleton. The protein localises to the microtubule organizing center. Its subcellular location is the centrosome. The protein resides in the centriole. It localises to the golgi apparatus membrane. In terms of biological role, negatively regulates cilia formation by recruiting the CP110-CEP97 complex (a negative regulator of ciliogenesis) at the distal end of the mother centriole in ciliary cells. At the beginning of cilia formation, MPHOSPH9 undergoes TTBK2-mediated phosphorylation and degradation via the ubiquitin-proteasome system and removes itself and the CP110-CEP97 complex from the distal end of the mother centriole, which subsequently promotes cilia formation. The protein is M-phase phosphoprotein 9 (MPHOSPH9) of Homo sapiens (Human).